The primary structure comprises 31 residues: Cyclotide mden-K (31 aa).

A cross-link (cyclopeptide (Gly-Asn)) is located at residues 1–31 (GSIPCGESCVWIPCISSVVGCACKNKVCYKN). 3 disulfides stabilise this stretch: cysteine 5–cysteine 21, cysteine 9–cysteine 23, and cysteine 14–cysteine 28.

This sequence belongs to the cyclotide family. Bracelet subfamily. In terms of processing, this is a cyclic peptide.

Probably participates in a plant defense mechanism. The polypeptide is Cyclotide mden-K (Melicytus dentatus (Tree violet)).